We begin with the raw amino-acid sequence, 191 residues long: Uridylate kinase (191 aa).

12-17 (GAGKGT) is an ATP binding site. Residues 33–63 (SAGDCLREEQNRPGSKYGNLIKEYIKDGKIV) are NMP. A ribonucleoside 5'-phosphate-binding positions include Arg-39, 61–63 (KIV), 91–94 (GFPR), and Gln-98. The LID stretch occupies residues 128–138 (HRGKTSGRSDD). Residue Arg-129 participates in ATP binding. Residues Arg-135 and Arg-146 each coordinate a ribonucleoside 5'-phosphate. ATP is bound at residue Gln-174.

The protein belongs to the adenylate kinase family. UMP-CMP kinase subfamily. In terms of assembly, monomer. Mg(2+) serves as cofactor.

The protein resides in the cytoplasm. It is found in the nucleus. The catalysed reaction is UMP + ATP = UDP + ADP. Functionally, catalyzes the phosphorylation of pyrimidine nucleoside monophosphates at the expense of ATP. Plays an important role in de novo pyrimidine nucleotide biosynthesis. Has preference for UMP and dUMP as phosphate acceptors, but can also use CMP, dCMP and AMP. The chain is Uridylate kinase from Schizosaccharomyces pombe (strain 972 / ATCC 24843) (Fission yeast).